Consider the following 661-residue polypeptide: Ubiquitin-associated and SH3 domain-containing protein A (661 aa).

A UBA domain is found at 15-60 (KLKSRSSPSLLEPLLAMGFPVHTALKALAATGRKTAEEALAWLHDH). The SH3 domain maps to 276-341 (VHYQTLRALF…PENYTDRASE (66 aa)). The phosphatase-like stretch occupies residues 395–661 (RKSVLVVRHG…FNWRNWISGN (267 aa)).

Homodimer or homooligomer. Interacts with CBL. Part of a complex containing CBL and activated EGFR. Interacts with ubiquitin and with mono-ubiquitinated proteins. Interacts with dynamin. In terms of tissue distribution, highest expression of UBASH3A in tissues belonging to the immune system, including spleen, peripheral blood leukocytes, thymus and bone marrow.

The protein localises to the cytoplasm. It localises to the nucleus. Functionally, interferes with CBL-mediated down-regulation and degradation of receptor-type tyrosine kinases. Promotes accumulation of activated target receptors, such as T-cell receptors, EGFR and PDGFRB, on the cell surface. Exhibits negligible protein tyrosine phosphatase activity at neutral pH. May act as a dominant-negative regulator of UBASH3B-dependent dephosphorylation. May inhibit dynamin-dependent endocytic pathways by functionally sequestering dynamin via its SH3 domain. In Homo sapiens (Human), this protein is Ubiquitin-associated and SH3 domain-containing protein A (UBASH3A).